We begin with the raw amino-acid sequence, 261 residues long: MSKFSDIITQLLFDAPPREINSVYDSLVIITEDTDNDTLLDALKRCLVAKRLPIDVEGSPTIVTEYNKDGAKYFDPFKKVLFSVDCLDRVGLDIEPHESETTPYQEKLYEELQKYVAKNFPGDSACTVLPTGDDDELAIIIVSSKFSPSNYWSGYWKSEYIYSPEERSLTGRIDVVVHYFEDGNVKFSTQEFIDKEDINDPISCIRALESEIETGLDESFSKLNQTQFAKLRRKLPVTRSKVNWGKAISNYRLGKDAAQGK.

This sequence belongs to the F-actin-capping protein alpha subunit family. Heterodimer of an alpha and a beta subunit.

Functionally, F-actin-capping proteins bind in a Ca(2+)-independent manner to the fast growing ends of actin filaments (barbed end) thereby blocking the exchange of subunits at these ends. Unlike other capping proteins (such as gelsolin and severin), these proteins do not sever actin filaments. This is F-actin-capping protein subunit alpha (CAP1) from Eremothecium gossypii (strain ATCC 10895 / CBS 109.51 / FGSC 9923 / NRRL Y-1056) (Yeast).